Consider the following 426-residue polypeptide: Histidinol dehydrogenase (426 aa).

Residues Y125, Q187, and N210 each coordinate NAD(+). The substrate site is built by S233, Q255, and H258. Residues Q255 and H258 each coordinate Zn(2+). Active-site proton acceptor residues include E323 and H324. Residues H324, D357, E411, and H416 each contribute to the substrate site. Position 357 (D357) interacts with Zn(2+). A Zn(2+)-binding site is contributed by H416.

The protein belongs to the histidinol dehydrogenase family. Zn(2+) is required as a cofactor.

It carries out the reaction L-histidinol + 2 NAD(+) + H2O = L-histidine + 2 NADH + 3 H(+). It participates in amino-acid biosynthesis; L-histidine biosynthesis; L-histidine from 5-phospho-alpha-D-ribose 1-diphosphate: step 9/9. Its function is as follows. Catalyzes the sequential NAD-dependent oxidations of L-histidinol to L-histidinaldehyde and then to L-histidine. In Methanothermobacter thermautotrophicus (strain ATCC 29096 / DSM 1053 / JCM 10044 / NBRC 100330 / Delta H) (Methanobacterium thermoautotrophicum), this protein is Histidinol dehydrogenase (hisD).